Here is a 433-residue protein sequence, read N- to C-terminus: Serine hydroxymethyltransferase (433 aa).

A (6S)-5,6,7,8-tetrahydrofolate-binding site is contributed by 121 to 123 (AHV). At K227 the chain carries N6-(pyridoxal phosphate)lysine. E243 is a binding site for (6S)-5,6,7,8-tetrahydrofolate.

Belongs to the SHMT family. In terms of assembly, homodimer. The cofactor is pyridoxal 5'-phosphate.

The protein localises to the cytoplasm. Its pathway is amino-acid biosynthesis; glycine biosynthesis; glycine from L-serine: step 1/1. Functionally, catalyzes the reversible interconversion of serine and glycine with a modified folate serving as the one-carbon carrier. Also exhibits a pteridine-independent aldolase activity toward beta-hydroxyamino acids, producing glycine and aldehydes, via a retro-aldol mechanism. This Saccharolobus islandicus (strain L.S.2.15 / Lassen #1) (Sulfolobus islandicus) protein is Serine hydroxymethyltransferase.